Consider the following 288-residue polypeptide: Eukaryotic translation initiation factor 3 subunit F-2 (288 aa).

One can recognise an MPN domain in the interval 12–149 (VLLHPLVLFQ…TRIFCAVATG (138 aa)).

This sequence belongs to the eIF-3 subunit F family. In terms of assembly, component of the eukaryotic translation initiation factor 3 (eIF-3) complex. The eIF-3 complex interacts with pix.

The protein resides in the cytoplasm. Functionally, component of the eukaryotic translation initiation factor 3 (eIF-3) complex, which is involved in protein synthesis of a specialized repertoire of mRNAs and, together with other initiation factors, stimulates binding of mRNA and methionyl-tRNAi to the 40S ribosome. The eIF-3 complex specifically targets and initiates translation of a subset of mRNAs involved in cell proliferation. This Drosophila persimilis (Fruit fly) protein is Eukaryotic translation initiation factor 3 subunit F-2.